The primary structure comprises 741 residues: ATP-dependent RNA helicase DRS1 (741 aa).

Basic residues predominate over residues 35–44 (VKNKKNKKSK). 2 disordered regions span residues 35–63 (VKNK…INPN) and 106–200 (GGLV…EDTA). Composition is skewed to acidic residues over residues 118–147 (KEEE…EELA) and 159–200 (VIDE…EDTA). Residues 222–250 (TTFQTLQLSRPVLKGLSQLGYTKPSPIQS) carry the Q motif motif. In terms of domain architecture, Helicase ATP-binding spans 253 to 429 (IPIALLGRDI…QLSLQRPVRI (177 aa)). 266-273 (AVTGSGKT) contributes to the ATP binding site. The DEAD box motif lies at 376-379 (DEAD). The 146-residue stretch at 458 to 603 (LLFQLLKKLD…GGEVKGKAVS (146 aa)) folds into the Helicase C-terminal domain. Residues 610 to 657 (DVEQLNKIVESKQEIIEEVLDEEKQAKEILQAEMQLAKASNMMKHEKE) adopt a coiled-coil conformation. Positions 650-741 (NMMKHEKEIQ…GSSKGGKRRK (92 aa)) are disordered. The span at 652–672 (MKHEKEIQSRPKRTWFESEKD) shows a compositional bias: basic and acidic residues. The segment covering 686–697 (KHGKKVNSKKRK) has biased composition (basic residues). Residues 698–723 (AIEVKKDDGGRSYKKTKVDRITDQKR) are compositionally biased toward basic and acidic residues.

This sequence belongs to the DEAD box helicase family. DDX27/DRS1 subfamily. Associates with pre-ribosomal particles.

It is found in the nucleus. The protein localises to the nucleolus. It catalyses the reaction ATP + H2O = ADP + phosphate + H(+). ATP-binding RNA helicase involved in ribosome assembly. This is ATP-dependent RNA helicase DRS1 (DRS1) from Scheffersomyces stipitis (strain ATCC 58785 / CBS 6054 / NBRC 10063 / NRRL Y-11545) (Yeast).